The following is a 256-amino-acid chain: ATP synthase peripheral stalk subunit b, mitochondrial (256 aa).

The N-terminal 42 residues, methionine 1–alanine 42, are a transit peptide targeting the mitochondrion. The residue at position 131 (lysine 131) is an N6-succinyllysine. An N6-acetyllysine mark is found at lysine 139, lysine 154, lysine 162, lysine 221, lysine 225, lysine 233, and lysine 244.

The protein belongs to the eukaryotic ATPase B chain family. In terms of assembly, component of the ATP synthase complex composed at least of ATP5F1A/subunit alpha, ATP5F1B/subunit beta, ATP5MC1/subunit c (homooctomer), MT-ATP6/subunit a, MT-ATP8/subunit 8, ATP5ME/subunit e, ATP5MF/subunit f, ATP5MG/subunit g, ATP5MK/subunit k, ATP5MJ/subunit j, ATP5F1C/subunit gamma, ATP5F1D/subunit delta, ATP5F1E/subunit epsilon, ATP5PF/subunit F6, ATP5PB/subunit b, ATP5PD/subunit d, ATP5PO/subunit OSCP. ATP synthase complex consists of a soluble F(1) head domain (subunits alpha(3) and beta(3)) - the catalytic core - and a membrane F(0) domain - the membrane proton channel (subunits c, a, 8, e, f, g, k and j). These two domains are linked by a central stalk (subunits gamma, delta, and epsilon) rotating inside the F1 region and a stationary peripheral stalk (subunits F6, b, d, and OSCP).

It is found in the mitochondrion. The protein localises to the mitochondrion inner membrane. Subunit b, of the mitochondrial membrane ATP synthase complex (F(1)F(0) ATP synthase or Complex V) that produces ATP from ADP in the presence of a proton gradient across the membrane which is generated by electron transport complexes of the respiratory chain. ATP synthase complex consist of a soluble F(1) head domain - the catalytic core - and a membrane F(1) domain - the membrane proton channel. These two domains are linked by a central stalk rotating inside the F(1) region and a stationary peripheral stalk. During catalysis, ATP synthesis in the catalytic domain of F(1) is coupled via a rotary mechanism of the central stalk subunits to proton translocation. In vivo, can only synthesize ATP although its ATP hydrolase activity can be activated artificially in vitro. Part of the complex F(0) domain. Part of the complex F(0) domain and the peripheric stalk, which acts as a stator to hold the catalytic alpha(3)beta(3) subcomplex and subunit a/ATP6 static relative to the rotary elements. In Mus musculus (Mouse), this protein is ATP synthase peripheral stalk subunit b, mitochondrial.